The following is an 843-amino-acid chain: INO80 complex subunit D-B (843 aa).

The span at 159–175 shows a compositional bias: basic and acidic residues; that stretch reads TLNHKQKQQDHSVDTNH. Disordered stretches follow at residues 159–216, 221–240, 503–550, 695–726, and 791–843; these read TLNH…PTVR, FKTS…STDN, YHHH…LPQG, SLLH…HLTD, and LSTP…TAAP. Polar residues-rich tracts occupy residues 176 to 187, 197 to 216, and 221 to 231; these read LRTSSLPSTLSH, RATQ…PTVR, and FKTSSSLQDTH. Residues 503–540 show a composition bias toward basic residues; it reads YHHHQQIQRHRPLKKAKPPALSKKHKKKGKRGTQRRPQ. The segment covering 705–717 has biased composition (pro residues); that stretch reads PPSPPSPQPPLTP. Residues 796 to 821 show a composition bias toward low complexity; the sequence is QPSSALSALPQSSQTRSTTTSPTSQT.

It belongs to the INO80D family. Component of the chromatin-remodeling INO80 complex.

It localises to the nucleus. Functionally, putative regulatory component of the chromatin remodeling INO80 complex which is involved in transcriptional regulation, DNA replication and probably DNA repair. The protein is INO80 complex subunit D-B (ino80db) of Danio rerio (Zebrafish).